Here is a 212-residue protein sequence, read N- to C-terminus: Protein-L-isoaspartate O-methyltransferase (212 aa).

Serine 60 is a catalytic residue.

The protein belongs to the methyltransferase superfamily. L-isoaspartyl/D-aspartyl protein methyltransferase family.

The protein localises to the cytoplasm. The catalysed reaction is [protein]-L-isoaspartate + S-adenosyl-L-methionine = [protein]-L-isoaspartate alpha-methyl ester + S-adenosyl-L-homocysteine. In terms of biological role, catalyzes the methyl esterification of L-isoaspartyl residues in peptides and proteins that result from spontaneous decomposition of normal L-aspartyl and L-asparaginyl residues. It plays a role in the repair and/or degradation of damaged proteins. The chain is Protein-L-isoaspartate O-methyltransferase from Methylorubrum populi (strain ATCC BAA-705 / NCIMB 13946 / BJ001) (Methylobacterium populi).